The following is a 296-amino-acid chain: ATP phosphoribosyltransferase (296 aa).

This sequence belongs to the ATP phosphoribosyltransferase family.

It is found in the cytoplasm. The enzyme catalyses 1-(5-phospho-beta-D-ribosyl)-ATP + diphosphate = 5-phospho-alpha-D-ribose 1-diphosphate + ATP. The protein operates within amino-acid biosynthesis; L-histidine biosynthesis; L-histidine from 5-phospho-alpha-D-ribose 1-diphosphate: step 1/9. In terms of biological role, catalyzes the condensation of ATP and 5-phosphoribose 1-diphosphate to form N'-(5'-phosphoribosyl)-ATP (PR-ATP). Has a crucial role in the pathway because the rate of histidine biosynthesis seems to be controlled primarily by regulation of the enzymatic activity. The sequence is that of ATP phosphoribosyltransferase (HIS1) from Yarrowia lipolytica (strain CLIB 122 / E 150) (Yeast).